A 608-amino-acid polypeptide reads, in one-letter code: Protein UL27 (608 aa).

Residues 1–13 (MNPVDQPPPPLPT) show a composition bias toward pro residues. Positions 1-33 (MNPVDQPPPPLPTQQPEEQAKEDHDDGDERLFR) are disordered. The segment covering 18 to 33 (EQAKEDHDDGDERLFR) has biased composition (basic and acidic residues).

The protein belongs to the herpesviridae U4 family. As to quaternary structure, interacts with host KAT5, PSME3 and EP400.

The protein resides in the host nucleus. It localises to the host nucleolus. Promotes a cell cycle arrest in G0/G1 by inducing the proteasomal degradation of host histone acetyltransferase KAT5/Tip60. The polypeptide is Protein UL27 (UL27) (Human cytomegalovirus (strain AD169) (HHV-5)).